A 254-amino-acid polypeptide reads, in one-letter code: 5-oxoprolinase subunit A (254 aa).

Belongs to the LamB/PxpA family. As to quaternary structure, forms a complex composed of PxpA, PxpB and PxpC.

The enzyme catalyses 5-oxo-L-proline + ATP + 2 H2O = L-glutamate + ADP + phosphate + H(+). Its function is as follows. Catalyzes the cleavage of 5-oxoproline to form L-glutamate coupled to the hydrolysis of ATP to ADP and inorganic phosphate. This is 5-oxoprolinase subunit A from Carboxydothermus hydrogenoformans (strain ATCC BAA-161 / DSM 6008 / Z-2901).